We begin with the raw amino-acid sequence, 754 residues long: MASQEMFPELGQSPAPGVKSRGVSRSPHPHQQQQQQQHQQHQGQFTGTVTGLDLDSSIATASSFANSSFDPNSNNVSPSAESYGYTAAGYLSGTPASQTDQNYANSLQIPQSYGTGLVPQFNESRGLPIQQQSQQQHHQQPSLDDNFSDLLNSNATEYDFNTVYQTHSPSSNTAPEYDSSLLLDPQVHQQSHPTQIPSSHSSTSPQISPLEQQQHSSPGPMSTQGSTTVAYYTPQHSRHASLDPATAAFLTSNTHPDWQAVMGNSAAFQGHRRAPSEVSEISSAAPSPYLSQHESFDGVDNNPSPLLAPQNDPSLYDSALGIENFTLSEQHQQHQGFSPAHSPYISPRLMPQQGQEMMPNVPYLSGPAPNTQYPTPPNDMYGNGAEGMMNMSQGTHPSVDIGQASQMAPPSINVEFAPPSRIPSFGPSKPASNLDSLSPPPSSTRSRGRSKSDPYAHPSTSRLRSSSTSSSLDPLAPTTPRSLSPFDSFGRQQQSNPSSRDPSPSRSNRRLSTSSIDSRNYILGLADPQRPGASPNDSKRVQKHPATFQCNLCPKRFTRAYNLRSHLRTHTDERPFVCTVCGKAFARQHDRKRHEGLHSGEKKFVCQGELSRGGQWGCGRRFARADALGRHFRSEAGRICIKPLLDEESQERERSLMDQQQHHLQPLPQQVMVPVDNPHAGNFVLPAALLAQYPALQTLQWDQIAASADDPSDIGGRSSFDASSGNEFGFEDDDSGLSSVSGINAGYSAAGNFY.

Disordered regions lie at residues Met1–Gly51, Ser63–Leu150, Val187–Thr227, Gln269–Val299, and Gly384–Lys543. Over residues His30–Gln44 the composition is skewed to low complexity. 2 stretches are compositionally biased toward polar residues: residues Ser63 to Ala80 and Thr94 to Gly114. The span at Gln130–Gln140 shows a compositional bias: low complexity. Over residues Pro141–Leu150 the composition is skewed to polar residues. Residues Gln189–Pro209 show a composition bias toward low complexity. Composition is skewed to polar residues over residues Leu210 to Thr227 and Ser279 to His293. 2 stretches are compositionally biased toward low complexity: residues Ser459 to Leu472 and Arg491 to Ser515. C2H2-type zinc fingers lie at residues Phe548 to His570 and Phe576 to His598. The C2H2-type 3; degenerate zinc-finger motif lies at Phe604–Glu635. The segment at Ala708–Leu737 is disordered.

It is found in the nucleus. Its subcellular location is the cytoplasm. Transcription factor involved in the regulation of calcium ion homeostasis. Regulates genes encoding calcium transporters, transcription factors and genes that could be directly or indirectly involved in calcium metabolism. Supports especially pmcA, pmcB and pmcC expression encoding for calcium-translocating P-type ATPases. Binds target promoters at motif A[GT][CG]CA[AC][AG]. Plays an essential role germination, radial growth, and asexual development. Also plays a major role in proper chitin and glucan incorporation into the cell wall. Involved in the high-osmolarity glycerol response (HOG) signaling pathway. Required for pathogenicity in an experimental murine model of invasive pulmonary aspergillosis. This Aspergillus fumigatus (strain ATCC MYA-4609 / CBS 101355 / FGSC A1100 / Af293) (Neosartorya fumigata) protein is C2H2 finger domain transcription factor crzA.